The following is a 238-amino-acid chain: Probable transcriptional regulatory protein llmg_0242 (238 aa).

It belongs to the TACO1 family. YeeN subfamily.

It localises to the cytoplasm. The sequence is that of Probable transcriptional regulatory protein llmg_0242 from Lactococcus lactis subsp. cremoris (strain MG1363).